A 481-amino-acid chain; its full sequence is UDP-glucose 6-dehydrogenase 1 (481 aa).

Residues 8-13, Asp33, Arg38, 86-90, 127-128, and Glu162 each bind NAD(+); these read GAGYVG, VNTPT, and ST. Substrate contacts are provided by residues 158 to 162, 217 to 224, and 257 to 270; these read EFLAE, KLAANAFL, and RIGA…VGFG. Residue Cys273 is the Nucleophile of the active site. Position 273–276 (273–276) interacts with NAD(+); the sequence is CFQK. 335-336 serves as a coordination point for substrate; sequence FK. Arg343 lines the NAD(+) pocket. Phosphoserine is present on Ser394. Arg448 is a substrate binding site.

The protein belongs to the UDP-glucose/GDP-mannose dehydrogenase family.

It carries out the reaction UDP-alpha-D-glucose + 2 NAD(+) + H2O = UDP-alpha-D-glucuronate + 2 NADH + 3 H(+). It functions in the pathway nucleotide-sugar biosynthesis; UDP-alpha-D-glucuronate biosynthesis; UDP-alpha-D-glucuronate from UDP-alpha-D-glucose: step 1/1. In terms of biological role, involved in the biosynthesis of UDP-glucuronic acid (UDP-GlcA), providing nucleotide sugars for cell-wall polymers. This is UDP-glucose 6-dehydrogenase 1 (UGD1) from Oryza sativa subsp. japonica (Rice).